Here is a 281-residue protein sequence, read N- to C-terminus: sn-glycerol-3-phosphate transport system permease protein UgpE (281 aa).

6 helical membrane passes run 16–36, 85–105, 113–133, 142–162, 202–222, and 247–267; these read LILG…AATL, FSIT…IVWF, FFWM…FPTV, LNSY…TFLF, ALFV…LLII, and WNQV…IVLA. The ABC transmembrane type-1 domain occupies 77-268; sequence MLNSFIMAFS…IPPVVIVLAM (192 aa).

It belongs to the binding-protein-dependent transport system permease family. UgpAE subfamily. The complex is composed of two ATP-binding proteins (UgpC), two transmembrane proteins (UgpA and UgpE) and a solute-binding protein (UgpB).

The protein resides in the cell inner membrane. Part of the ABC transporter complex UgpBAEC involved in sn-glycerol-3-phosphate (G3P) import. Probably responsible for the translocation of the substrate across the membrane. The polypeptide is sn-glycerol-3-phosphate transport system permease protein UgpE (ugpE) (Salmonella typhi).